Consider the following 274-residue polypeptide: Guanylyl cyclase 1 (274 aa).

As to quaternary structure, functions both as monomer and homooligomer. It depends on Mg(2+) as a cofactor.

The enzyme catalyses GTP = 3',5'-cyclic GMP + diphosphate. Its pathway is nucleotide metabolism. In terms of biological role, magnesium-dependent guanylyl cyclase that catalyzes the formation of guanosine 3',5'-cyclic monophosphate (cGMP) from guanosine 5'-triphosphate (GTP). Can also use ATP as substrate with a low activity. This Arabidopsis thaliana (Mouse-ear cress) protein is Guanylyl cyclase 1.